The sequence spans 1128 residues: MGDTAPPQAPTGGLGGAPGAGLLGGGSVTPRVHSAIVERLRARIAVCRQHHLSCEGRYERGRAESSDRERESTLQLLSLVQHGQGARKAGKHTKATASTATATAPPPAPAAPPTASQTAAPAAPAPPPDYHHHHQQHLRSSSSSGGSGGIDGEQQQQPPASTPGDQRNSALIALQGSLKRKQIVNLSPANSKRPNGFVDNSFLDIKRIRVGENLAAGPGGLPVNNGQSQMMSGTLPMSQVPLRKTAALPPPPTHSPGNGLFNMGLKEVKKEPGETLSCSKHVDGQVTQENIFSNRYGDDPGEQLMDPELQELFNELTNISVPPMSDLELENMINATIKQDDPFNIDLGQQSQRSTPRPSLPLEKTVIKSEYSPGLTQGPSGSPQLRPSSAGPAFSMASSGLSASSPIPSVPQSQAQPPPATGAARALPSWQEVSHAQQLKQIAANRQQHVRMHQQQQQHQPTSWPALPSSAGPSPGPFGQEKIPSPSFGQQPFSPQSTPMPGVTGGSNQSKVMANYLFKASPSAQGGPLDVLLQPKPQDLSRSFLNNPHPAMEPRHGSTKPLFHFNSDQANQQMPSVLPSQSKPSLLHYTQQQPQQSSITVQPQQQQQQPQQQQQPQQQQQPQPQQQQQQQPQAQQPAAQPTQPLSNQPLLRAPLPLQQKILLQKIQNQPITGLGYQVSQQHRQDQHSVVGQNAGPSPSPNPCSNPNTGSGYMNSQQSLLNQQLMGKKQTLQRQIMEQKQQLLLQQQMLADAEKIAPQDQINRHLTRPPPDYKDQRRNVGNMQPTAQYSGGSSTVSLNSNQALANPVSTHTILTPNSSLMSTSHGTRMPSLPTAVQNIGIYGNLPCSQPSTYSVTSGMNQLTQPRNPNQLIANQNNPLMPRPPTLGPSNNNNNNVATFGAGSVGNSQQLRPNLTHSMASMPAQRTSNVMITSNTATPNWASQEATAKQQEALKSAGVRFPTGTTTAYAPNQSLQQAVGSQQFSQRAVAPSNQLTPAVQMRPMNQMSQTLNGQNMGPLRSLNLRPNQLSTQLLPTMNQAGTGLSQSRTVSQPPSLAAGGFPSPNQSSRAFQGTDHGNDLAFDFLNQQTDNMGPALNSDADFIDSLLKTEPGNDDWMKDINLDEILGNNS.

Disordered regions lie at residues 1-22 (MGDT…GAGL) and 81-167 (QHGQ…GDQR). The span at 12–22 (GGLGGAPGAGL) shows a compositional bias: gly residues. Positions 113-122 (PTASQTAAPA) are enriched in low complexity. Ser177 is subject to Phosphoserine. 5 disordered regions span residues 343-509 (FNID…GSNQ), 521-649 (SPSA…SNQP), 677-714 (QVSQ…GYMN), 758-794 (QDQI…GSST), and 1039-1073 (GTGL…QGTD). 2 stretches are compositionally biased toward polar residues: residues 347–357 (LGQQSQRSTPR) and 374–387 (GLTQ…QLRP). Positions 395–426 (SMASSGLSASSPIPSVPQSQAQPPPATGAARA) are enriched in low complexity. A compositionally biased stretch (polar residues) spans 431–446 (QEVSHAQQLKQIAANR). Composition is skewed to low complexity over residues 453 to 473 (HQQQ…SAGP) and 484 to 497 (PSPS…SPQS). Polar residues predominate over residues 566–584 (NSDQANQQMPSVLPSQSKP). Residues 590-649 (TQQQPQQSSITVQPQQQQQQPQQQQQPQQQQQPQPQQQQQQQPQAQQPAAQPTQPLSNQP) show a composition bias toward low complexity. 3 stretches are compositionally biased toward polar residues: residues 677-695 (QVSQ…QNAG), 778-794 (NVGN…GSST), and 1039-1052 (GTGL…SQPP).

It belongs to the mastermind family. As to quaternary structure, interacts through its N-terminal region with the ankyrin repeat region of the Notch proteins NOTCH1, NOTCH2, NOTCH3 and NOTCH4. Forms a DNA-binding complex with Notch proteins and RBPSUH/RBP-J kappa.

The protein localises to the nucleus speckle. In terms of biological role, acts as a transcriptional coactivator for NOTCH proteins. Has been shown to amplify NOTCH-induced transcription of HES1. Potentiates activation by NOTCH3 and NOTCH4 more efficiently than MAML1 or MAML3. This is Mastermind-like protein 2 (MAML2) from Bos taurus (Bovine).